The sequence spans 342 residues: Ferrochelatase (342 aa).

Fe cation is bound by residues His-188 and Glu-268.

This sequence belongs to the ferrochelatase family.

The protein resides in the cytoplasm. The enzyme catalyses heme b + 2 H(+) = protoporphyrin IX + Fe(2+). It functions in the pathway porphyrin-containing compound metabolism; protoheme biosynthesis; protoheme from protoporphyrin-IX: step 1/1. Functionally, catalyzes the ferrous insertion into protoporphyrin IX. This Rickettsia conorii (strain ATCC VR-613 / Malish 7) protein is Ferrochelatase.